A 250-amino-acid polypeptide reads, in one-letter code: Small ribosomal subunit protein uS2 (250 aa).

The protein belongs to the universal ribosomal protein uS2 family.

In Polaromonas naphthalenivorans (strain CJ2), this protein is Small ribosomal subunit protein uS2.